The chain runs to 218 residues: Octanoyltransferase (218 aa).

The BPL/LPL catalytic domain occupies 31–206 (REAGDEVWLV…QLVKHLDYAE (176 aa)). Residues 70-77 (RGGQVTYH), 137-139 (SLG), and 150-152 (GLA) each bind substrate. The active-site Acyl-thioester intermediate is cysteine 168.

The protein belongs to the LipB family.

It localises to the cytoplasm. It carries out the reaction octanoyl-[ACP] + L-lysyl-[protein] = N(6)-octanoyl-L-lysyl-[protein] + holo-[ACP] + H(+). Its pathway is protein modification; protein lipoylation via endogenous pathway; protein N(6)-(lipoyl)lysine from octanoyl-[acyl-carrier-protein]: step 1/2. Functionally, catalyzes the transfer of endogenously produced octanoic acid from octanoyl-acyl-carrier-protein onto the lipoyl domains of lipoate-dependent enzymes. Lipoyl-ACP can also act as a substrate although octanoyl-ACP is likely to be the physiological substrate. This chain is Octanoyltransferase, found in Pseudomonas syringae pv. tomato (strain ATCC BAA-871 / DC3000).